The sequence spans 411 residues: Z-DNA-binding protein 1 (411 aa).

Z-binding domains follow at residues 8–70 and 84–148; these read LSTG…SIGG and SSAQ…HSRQ. Residues lysine 17 and lysine 43 each participate in a glycyl lysine isopeptide (Lys-Gly) (interchain with G-Cter in ubiquitin) cross-link. A disordered region spans residues 60 to 86; that stretch reads SPEPATWSIGGAASGDGAPAIPENSSA. 2 consecutive short sequence motifs (RIP homotypic interaction motif (RHIM)) follow at residues 188-205 and 237-261; these read NSNAIQIGHGNVIVREKA and YIYMDKSLLQQVQLGHHNEMSLVGD. Disordered regions lie at residues 263–303 and 332–411; these read GKHP…EGDT and KGEV…LSKQ. 3 stretches are compositionally biased toward polar residues: residues 268–292, 350–371, and 400–411; these read YSFSDSPPEVSTTTADPGASFNMQT, GTSSEATPPRSCQHTPSDSMLP, and IESSQDTGLSKQ.

Homodimer. Interacts (via RIP homotypic interaction motif) with RIPK3; leading to RIPK3 activation and necroptosis; interaction is enhanced by CASP6. Interacts (via RIP homotypic interaction motif) with RIPK1. Component of the AIM2 PANoptosome complex, a multiprotein complex that drives inflammatory cell death (PANoptosis). In terms of assembly, (Microbial infection) Interacts (via RIP homotypic interaction motif) with murid herpesvirus protein RIR1 (via RIP homotypic interaction motif); leading to inhibition of ZBP1-dependent necroptosis. As to quaternary structure, (Microbial infection) Interacts with vaccinia virus E3 protein; leading to inhibit ZBP1-dependent necroptosis. Post-translationally, ubiquitinated; polyubiquitinated following influenza A virus (IAV) infection. Phosphorylated. As to expression, expressed in lung, spleen and liver. Lower levels were seen in heart, kidney and testis. Expression is greatly up-regulated in tumor stromal cells and activated macrophages.

It is found in the cytoplasm. The protein resides in the nucleus. With respect to regulation, ZBP1-dependent necroptosis is normally inhibited by RIPK1: RIPK1 inhibits the ZBP1-induced activation of RIPK3 via FADD-mediated recruitment of CASP8, which cleaves RIPK1 and limits TNF-induced necroptosis. In terms of biological role, key innate sensor that recognizes and binds Z-RNA structures, which are produced by a number of viruses, such as herpesvirus, orthomyxovirus or flavivirus, and triggers different forms of cell death. ZBP1 acts as an essential mediator of pyroptosis, necroptosis and apoptosis (PANoptosis), an integral part of host defense against pathogens, by activating RIPK3, caspase-8 (CASP8), and the NLRP3 inflammasome. Key activator of necroptosis, a programmed cell death process in response to death-inducing TNF-alpha family members, via its ability to bind Z-RNA: once activated upon Z-RNA-binding, ZBP1 interacts and stimulates RIPK3 kinase, which phosphorylates and activates MLKL, triggering execution of programmed necrosis. In addition to TNF-induced necroptosis, necroptosis can also take place in the nucleus in response to orthomyxoviruses infection: ZBP1 recognizes and binds Z-RNA structures that are produced in infected nuclei by orthomyxoviruses, such as the influenza A virus (IAV), leading to ZBP1 activation, RIPK3 stimulation and subsequent MLKL phosphorylation, triggering disruption of the nuclear envelope and leakage of cellular DNA into the cytosol. ZBP1-dependent cell death in response to IAV infection promotes interleukin-1 alpha (IL1A) induction in an NLRP3-inflammasome-independent manner: IL1A expression is required for the optimal interleukin-1 beta (IL1B) production, and together, these cytokines promote infiltration of inflammatory neutrophils to the lung, leading to the formation of neutrophil extracellular traps. In addition to its direct role in driving necroptosis via its ability to sense Z-RNAs, also involved in PANoptosis triggered in response to bacterial infection: component of the AIM2 PANoptosome complex, a multiprotein complex that triggers PANoptosis. Also acts as the apical sensor of fungal infection responsible for activating PANoptosis. Involved in CASP8-mediated cell death via its interaction with RIPK1 but independently of its ability to sense Z-RNAs. In some cell types, also able to restrict viral replication by promoting cell death-independent responses. In response to flavivirus infection in neurons, promotes a cell death-independent pathway that restricts viral replication: together with RIPK3, promotes a death-independent transcriptional program that modifies the cellular metabolism via up-regulation expression of the enzyme ACOD1/IRG1 and production of the metabolite itaconate. Itaconate inhibits the activity of succinate dehydrogenase, generating a metabolic state in neurons that suppresses replication of viral genomes. This is Z-DNA-binding protein 1 from Mus musculus (Mouse).